A 1410-amino-acid chain; its full sequence is Condensin-1 complex subunit CAP-D2 (1410 aa).

Positions Leu-469–Thr-480 are enriched in basic and acidic residues. Disordered stretches follow at residues Leu-469–Ile-492, His-504–Val-525, Lys-860–Ala-879, and Lys-1208–Ser-1410. Polar residues predominate over residues Glu-869–Ala-879. Residues Lys-1208–Thr-1226 show a composition bias toward basic and acidic residues. Composition is skewed to acidic residues over residues Pro-1240–Asp-1284 and Ile-1306–Pro-1319. Residues Gln-1323–Asp-1339 show a composition bias toward polar residues. Over residues Ile-1342 to Asp-1365 the composition is skewed to acidic residues. The segment covering Gln-1368–Gln-1379 has biased composition (polar residues).

This sequence belongs to the CND1 (condensin subunit 1) family. In terms of assembly, component of the condensin complex. Present in buds.

It localises to the chromosome. Its subcellular location is the nucleus. Functionally, essential protein. Regulatory subunit of the condensin complex, a complex required for conversion of interphase chromatin into mitotic-like condense chromosomes. The condensin complex probably introduces positive supercoils into relaxed DNA in the presence of type I topoisomerases and converts nicked DNA into positive knotted forms in the presence of type II topoisomerases. Required for fertility, growth and euchromatin organization, but not for sister chromatid cohesion. Necessary to maintain normal structural integrity of the meiotic chromosomes during the two nuclear divisions of gametogenesis, especially to maintain compaction of the centromeric repeats and 45S rDNA. Also seems to be involved in crossover formation during meiotic prophase I. Prevents centromeric and pericentromeric heterochromatin repeats association. Contributes to the induction of stress-responsive genes in response to stress treatment. The chain is Condensin-1 complex subunit CAP-D2 from Arabidopsis thaliana (Mouse-ear cress).